The chain runs to 499 residues: Potassium voltage-gated channel subfamily A member 2 (499 aa).

The interval 1–26 (MTVATEDPADEAAALPGHPQDTYDPE) is disordered. The tetramerization domain stretch occupies residues 1 to 125 (MTVATEDPAD…YELGEEAMEM (125 aa)). Residues 1–160 (MTVATEDPAD…LLFEYPESSG (160 aa)) are Cytoplasmic-facing. Residues 161–182 (PARIIAIVSVMVILISIVSFCL) form a helical membrane-spanning segment. Residues 183 to 221 (ETLPIFRDENEDMHGSGMTFHTYSNSTAGYQQSTSFTDP) are Extracellular-facing. An N-linked (GlcNAc...) asparagine glycan is attached at asparagine 207. Residues 222–243 (FFIVETLCIIWFSFEFLVRFFA) form a helical membrane-spanning segment. The S-palmitoyl cysteine moiety is linked to residue cysteine 244. The Cytoplasmic portion of the chain corresponds to 244–254 (CPSKAGFFTNI). Residues 255-275 (MNIIDIVAIIPYFITLGTELA) traverse the membrane as a helical segment. Topologically, residues 276–289 (EKPEDAQQGQQAMS) are extracellular. The helical; Voltage-sensor transmembrane segment at 290-310 (LAILRVIRLVRVFRIFKLSRH) threads the bilayer. The Cytoplasmic portion of the chain corresponds to 311–325 (SKGLQILGQTLKASM). The S4-S5 linker stretch occupies residues 312–325 (KGLQILGQTLKASM). Residues 326 to 347 (RELGLLIFFLFIGVILFSSAVY) traverse the membrane as a helical segment. Residues 348-361 (FAEADERDSQFPSI) lie on the Extracellular side of the membrane. The helical intramembrane region spans 362 to 373 (PDAFWWAVVSMT). A Selectivity filter motif is present at residues 374–379 (TVGYGD). Residues 374 to 381 (TVGYGDMV) lie within the membrane without spanning it. Topologically, residues 382-388 (PTTIGGK) are extracellular. The chain crosses the membrane as a helical span at residues 389 to 417 (IVGSLCAIAGVLTIALPVPVIVSNFNYFY). The Cytoplasmic segment spans residues 418–499 (HRETEGEEQA…VNITKMLTDV (82 aa)). Position 429 is a phosphotyrosine (tyrosine 429). Residues serine 434, serine 440, serine 441, and serine 449 each carry the phosphoserine modification. Phosphotyrosine is present on tyrosine 458. Serine 468 carries the post-translational modification Phosphoserine. The PDZ-binding signature appears at 497-499 (TDV).

It belongs to the potassium channel family. A (Shaker) (TC 1.A.1.2) subfamily. Kv1.2/KCNA2 sub-subfamily. In terms of assembly, homotetramer and heterotetramer with other channel-forming alpha subunits, such as KCNA1, KCNA4, KCNA5, KCNA6 and KCNA7. Channel activity is regulated by interaction with the beta subunits, including KCNAB1 and KCNAB2. Identified in a complex with KCNA1 and KCNAB2. Identified in a complex with KCNA4 and FYN. Identified in a complex with KCNA5 and KCNAB1. Interacts with the beta subunit KCNAB1. Interacts with PTK2B. Interacts (via C-terminus) with CTTN. Interacts (via N-terminal cytoplasmic domain) with RHOA (GTP-bound form); this regulates channel activity by reducing location at the cell surface in response to CHRM1 activation. Interacts with DRD2. Interacts with SIGMAR1; cocaine consumption leads to increased interaction. Interacts with ADAM22. Interacts with CNTNAP2. Interacts (via C-terminus) with the PDZ domains of DLG1, DLG2 and DLG4. Interacts with ADAM11. Interacts with LYNX1. In terms of processing, phosphorylated on tyrosine residues; phosphorylation increases in response to ischemia. Phosphorylated on tyrosine residues by activated PTK2B/PYK2. Phosphorylation on tyrosine residues suppresses ion channel activity. Phosphorylated on tyrosine residues in response to CHRM1 activation; this abolishes interaction with CTTN. This is probably due to endocytosis of the phosphorylated channel subunits. Phosphorylated on serine residues in response to increased cAMP levels; phosphorylation is apparently not catalyzed by PKA. N-glycosylated, with complex, sialylated N-glycans. As to expression, detected in portal vein myocytes (at protein level). Detected in portal vein. Brain, liver and kidney.

It localises to the cell membrane. The protein resides in the membrane. The protein localises to the cell projection. It is found in the axon. Its subcellular location is the synapse. It localises to the presynaptic cell membrane. The protein resides in the synaptosome. The protein localises to the endoplasmic reticulum membrane. It is found in the dendrite. Its subcellular location is the lamellipodium membrane. It localises to the cell junction. The protein resides in the paranodal septate junction. The enzyme catalyses K(+)(in) = K(+)(out). With respect to regulation, inhibited by 4-aminopyridine (4-AP). Inhibited by dendrotoxin (DTX) and charybdotoxin (CTX), but not by tetraethylammonium (TEA). Inhibited by tityustoxin-K alpha (TsTX-Kalpha), a toxin that is highly specific for KCNA2. Inhibited by maurotoxin. Inhibited by kappaM conotoxins kappaM-RIIIJ and kappaM-RIIIK. Voltage-gated potassium channel that mediates transmembrane potassium transport in excitable membranes, primarily in the brain and the central nervous system, but also in the cardiovascular system. Prevents aberrant action potential firing and regulates neuronal output. Forms tetrameric potassium-selective channels through which potassium ions pass in accordance with their electrochemical gradient. The channel alternates between opened and closed conformations in response to the voltage difference across the membrane. Can form functional homotetrameric channels and heterotetrameric channels that contain variable proportions of KCNA1, KCNA2, KCNA4, KCNA5, KCNA6, KCNA7, and possibly other family members as well; channel properties depend on the type of alpha subunits that are part of the channel. Channel properties are modulated by cytoplasmic beta subunits that regulate the subcellular location of the alpha subunits and promote rapid inactivation of delayed rectifier potassium channels. In vivo, membranes probably contain a mixture of heteromeric potassium channel complexes, making it difficult to assign currents observed in intact tissues to any particular potassium channel family member. Homotetrameric KCNA2 forms a delayed-rectifier potassium channel that opens in response to membrane depolarization, followed by slow spontaneous channel closure. In contrast, a heteromultimer formed by KCNA2 and KCNA4 shows rapid inactivation. Regulates neuronal excitability and plays a role as pacemaker in the regulation of neuronal action potentials. KCNA2-containing channels play a presynaptic role and prevent hyperexcitability and aberrant action potential firing. Response to toxins that are selective for KCNA2-containing potassium channels suggests that in Purkinje cells, dendritic subthreshold KCNA2-containing potassium channels prevent random spontaneous calcium spikes, suppressing dendritic hyperexcitability without hindering the generation of somatic action potentials, and thereby play an important role in motor coordination. Plays a role in the induction of long-term potentiation of neuron excitability in the CA3 layer of the hippocampus. May function as down-stream effector for G protein-coupled receptors and inhibit GABAergic inputs to basolateral amygdala neurons. May contribute to the regulation of neurotransmitter release, such as gamma-aminobutyric acid (GABA). Contributes to the regulation of the axonal release of the neurotransmitter dopamine. Reduced KCNA2 expression plays a role in the perception of neuropathic pain after peripheral nerve injury, but not acute pain. Plays a role in the regulation of the time spent in non-rapid eye movement (NREM) sleep. This Oryctolagus cuniculus (Rabbit) protein is Potassium voltage-gated channel subfamily A member 2 (KCNA2).